A 306-amino-acid polypeptide reads, in one-letter code: Putative syntaxin-131 (306 aa).

Met1 is subject to N-acetylmethionine. Topologically, residues 1-276 (MNDLLKGSLE…AVKSQKSSRK (276 aa)) are cytoplasmic. Residues 11–23 (FSRDRSNRSDIES) are compositionally biased toward basic and acidic residues. The tract at residues 11-35 (FSRDRSNRSDIESGHGPGNSGDLGL) is disordered. Coiled-coil stretches lie at residues 35–72 (LSGFFKKVQEIEKQYEKLDKHLNKLQGAHEETKAVTKA) and 134–162 (KKKFKDKISEFQTLRQNIQQEYREVVERR). The t-SNARE coiled-coil homology domain occupies 205-267 (LAEIQERHDA…QSGNNQLTKA (63 aa)). The chain crosses the membrane as a helical; Anchor for type IV membrane protein span at residues 277–297 (WMCIAILILLIIIIITVISVL). Residues 298–306 (KPWTQKNGA) lie on the Vesicular side of the membrane.

The protein belongs to the syntaxin family. Part of the t-SNARE complex.

It is found in the membrane. Functionally, vesicle trafficking protein that functions in the secretory pathway. This Arabidopsis thaliana (Mouse-ear cress) protein is Putative syntaxin-131 (SYP131).